The primary structure comprises 96 residues: Large ribosomal subunit protein bL28 (96 aa).

The protein belongs to the bacterial ribosomal protein bL28 family.

This chain is Large ribosomal subunit protein bL28, found in Methylocella silvestris (strain DSM 15510 / CIP 108128 / LMG 27833 / NCIMB 13906 / BL2).